The primary structure comprises 388 residues: Serine/threonine-protein phosphatase sitA (388 aa).

Positions 67 and 69 each coordinate Mn(2+). Positions P86–G146 are disordered. Residues D161 and N193 each contribute to the Mn(2+) site. H194 (proton donor) is an active-site residue. Mn(2+) contacts are provided by H243 and H317.

The protein belongs to the PPP phosphatase family. PP-6 (PP-V) subfamily. It depends on Mn(2+) as a cofactor.

The enzyme catalyses O-phospho-L-threonyl-[protein] + H2O = L-threonyl-[protein] + phosphate. In terms of biological role, protein phosphatase that acts as a modulator of pkcA/mpkA activity involved in the cell wall integrity pathway. Plays an important role in regulation of adhesion, cell wall integrity, biofilm formation, and virulence. This Aspergillus fumigatus (strain ATCC MYA-4609 / CBS 101355 / FGSC A1100 / Af293) (Neosartorya fumigata) protein is Serine/threonine-protein phosphatase sitA.